The chain runs to 334 residues: Porphobilinogen deaminase (334 aa).

C250 carries the post-translational modification S-(dipyrrolylmethanemethyl)cysteine.

The protein belongs to the HMBS family. In terms of assembly, monomer. The cofactor is dipyrromethane.

The catalysed reaction is 4 porphobilinogen + H2O = hydroxymethylbilane + 4 NH4(+). Its pathway is porphyrin-containing compound metabolism; protoporphyrin-IX biosynthesis; coproporphyrinogen-III from 5-aminolevulinate: step 2/4. Functionally, tetrapolymerization of the monopyrrole PBG into the hydroxymethylbilane pre-uroporphyrinogen in several discrete steps. The polypeptide is Porphobilinogen deaminase (Cutibacterium acnes (strain DSM 16379 / KPA171202) (Propionibacterium acnes)).